Here is a 111-residue protein sequence, read N- to C-terminus: Nascent polypeptide-associated complex protein (111 aa).

One can recognise an NAC-A/B domain in the interval 3-72 (GMNPRQMKKL…EEVREVLEIS (70 aa)).

This sequence belongs to the NAC-alpha family. As to quaternary structure, homodimer. Interacts with the ribosome. Binds ribosomal RNA.

In terms of biological role, contacts the emerging nascent chain on the ribosome. In Thermococcus kodakarensis (strain ATCC BAA-918 / JCM 12380 / KOD1) (Pyrococcus kodakaraensis (strain KOD1)), this protein is Nascent polypeptide-associated complex protein.